A 500-amino-acid chain; its full sequence is Alpha-L-arabinofuranosidase (500 aa).

A signal peptide spans methionine 1–alanine 21. N-linked (GlcNAc...) asparagine glycosylation is present at asparagine 467.

This sequence belongs to the glycosyl hydrolase 54 family.

It carries out the reaction Hydrolysis of terminal non-reducing alpha-L-arabinofuranoside residues in alpha-L-arabinosides.. Its pathway is glycan metabolism; L-arabinan degradation. This chain is Alpha-L-arabinofuranosidase (abf1), found in Hypocrea jecorina (Trichoderma reesei).